The primary structure comprises 141 residues: Large ribosomal subunit protein uL16c (141 aa).

Belongs to the universal ribosomal protein uL16 family. As to quaternary structure, part of the 50S ribosomal subunit.

It localises to the plastid. The protein resides in the chloroplast. This Zygnema circumcarinatum (Green alga) protein is Large ribosomal subunit protein uL16c.